Reading from the N-terminus, the 376-residue chain is MDTIININNNNQKYPQSAEEYHKVLCNYFITLQSAMQSTSRPSSSSPPSLPAVSSELLSSSFPTNAPESSSRDLAPKQNQFTINVVLFDEKKKKNPEENLPANGDQLATLRSLMMQINPSSPPSIPATSPQLPLAESENVPESSSTLKDHKFSLNTMLFNVKKNDAVKISLANQEQWAKFHEIGTEMMVFNSGRRLFPLLAYKVSGLDPHKLYCAGVHMIPDSAYKQEYDHDLQQWVNCLNQKKTIFKPTSEILGRIENGFKLMSLGIDMSDVKIFNIAIRKKTPLQIEKSRKPNLDKTIEVLIQYKYLPVIKIYELSNSGMEKKEIAQATFPETSFVTVSIYRNQKIKEMKTLGNKYCRTDRKQIVMEQRGELEQ.

Residues 38–63 (STSRPSSSSPPSLPAVSSELLSSSFP) are compositionally biased toward low complexity. The tract at residues 38-76 (STSRPSSSSPPSLPAVSSELLSSSFPTNAPESSSRDLAP) is disordered. The T-box DNA-binding region spans 171–364 (LANQEQWAKF…GNKYCRTDRK (194 aa)).

Its subcellular location is the nucleus. Its function is as follows. Transcriptional regulator involved in developmental processes. Directly binds to the promoter region of the sex-determining factor xol-1 to activate its transcription. Its activation of xol-1 transcription controls sex determination and X chromosome dosage compensation to promote male development. Has a role in the fox-1-sex-1-mediated determination of sexual fate. The sequence is that of T-box transcription factor 18 from Caenorhabditis elegans.